Consider the following 268-residue polypeptide: Calpain small subunit 1 (268 aa).

Met-1 is modified (N-acetylmethionine). Ser-6 is subject to Phosphoserine. The region spanning 91 to 125 (EANESEEVRQFRRLFAQLAGDDMEVSATELMNILN) is the EF-hand 1; atypical domain. Ala-109, Asp-112, Glu-114, Glu-119, Asp-137, Asp-152, Asp-154, Thr-156, Lys-158, and Glu-163 together coordinate Ca(2+). 4 consecutive EF-hand domains span residues 139–172 (FGID…NNIK), 169–204 (NNIK…AGFH), 205–233 (LNEH…ISCL), and 234–268 (VRLD…TMYS). Position 179 is an N6-acetyllysine (Lys-179). 6 residues coordinate Ca(2+): Asp-182, Asp-184, Ser-186, Thr-188, Glu-193, and Asp-225.

In terms of assembly, homodimer or heterodimer of a large (catalytic) and a small (regulatory) subunit. In presence of calcium, the heterodimer dissociates.

It is found in the cytoplasm. The protein resides in the cell membrane. Its function is as follows. Regulatory subunit of the calcium-regulated non-lysosomal thiol-protease which catalyzes limited proteolysis of substrates involved in cytoskeletal remodeling and signal transduction. Essential for embryonic development. The protein is Calpain small subunit 1 (CAPNS1) of Homo sapiens (Human).